Consider the following 334-residue polypeptide: MIEADRLIQPQLQGQDDVVDRAMRPKLLDEYTGQDDTRAQLKVFIQAAKNRNEALDHMLIYGPPGLGKTTLAMIVANEMGVNIKSTSGPVLEKAGDLAALLTNLESGDVLFIDEIHRLSPVVEEILYPAMEDYQLDIMIGEGPAARSIKLDLPPFTLVGATTRAGALTSPLRARFGIPLRLEFYNIKDLSTIVTRSAQVMGLEIDTEGAFEIARRSRGTPRIANRLLRRVRDYAEVKHDGAITQFVADHALDLLDVDNEGFDYMDRKLMLAIIDKFMGGPVGLDNLAAAIGEERETIEDVLEPFLIQQGFIQRTPRGRIATARAYQHFQLIKPE.

The large ATPase domain (RuvB-L) stretch occupies residues 4–184; the sequence is ADRLIQPQLQ…FGIPLRLEFY (181 aa). Residues arginine 24, glycine 65, lysine 68, threonine 69, threonine 70, 131 to 133, arginine 174, tyrosine 184, and arginine 221 each bind ATP; that span reads EDY. Threonine 69 is a Mg(2+) binding site. Positions 185–255 are small ATPAse domain (RuvB-S); sequence NIKDLSTIVT…VADHALDLLD (71 aa). Positions 258–334 are head domain (RuvB-H); it reads NEGFDYMDRK…YQHFQLIKPE (77 aa). Residues arginine 294, arginine 313, and arginine 318 each coordinate DNA.

The protein belongs to the RuvB family. As to quaternary structure, homohexamer. Forms an RuvA(8)-RuvB(12)-Holliday junction (HJ) complex. HJ DNA is sandwiched between 2 RuvA tetramers; dsDNA enters through RuvA and exits via RuvB. An RuvB hexamer assembles on each DNA strand where it exits the tetramer. Each RuvB hexamer is contacted by two RuvA subunits (via domain III) on 2 adjacent RuvB subunits; this complex drives branch migration. In the full resolvosome a probable DNA-RuvA(4)-RuvB(12)-RuvC(2) complex forms which resolves the HJ.

The protein localises to the cytoplasm. It catalyses the reaction ATP + H2O = ADP + phosphate + H(+). The RuvA-RuvB-RuvC complex processes Holliday junction (HJ) DNA during genetic recombination and DNA repair, while the RuvA-RuvB complex plays an important role in the rescue of blocked DNA replication forks via replication fork reversal (RFR). RuvA specifically binds to HJ cruciform DNA, conferring on it an open structure. The RuvB hexamer acts as an ATP-dependent pump, pulling dsDNA into and through the RuvAB complex. RuvB forms 2 homohexamers on either side of HJ DNA bound by 1 or 2 RuvA tetramers; 4 subunits per hexamer contact DNA at a time. Coordinated motions by a converter formed by DNA-disengaged RuvB subunits stimulates ATP hydrolysis and nucleotide exchange. Immobilization of the converter enables RuvB to convert the ATP-contained energy into a lever motion, pulling 2 nucleotides of DNA out of the RuvA tetramer per ATP hydrolyzed, thus driving DNA branch migration. The RuvB motors rotate together with the DNA substrate, which together with the progressing nucleotide cycle form the mechanistic basis for DNA recombination by continuous HJ branch migration. Branch migration allows RuvC to scan DNA until it finds its consensus sequence, where it cleaves and resolves cruciform DNA. This chain is Holliday junction branch migration complex subunit RuvB, found in Shewanella putrefaciens (strain CN-32 / ATCC BAA-453).